A 208-amino-acid polypeptide reads, in one-letter code: Ubiquitin-conjugating enzyme E2 S (208 aa).

Residues 14–160 (QTIRQVMKEL…ARMMTEIHAQ (147 aa)) form the UBC core domain. Cys98 acts as the Glycyl thioester intermediate in catalysis. The tract at residues 161-196 (PAKCGAGASDAKDDDGPSTKKHAGVDKKLQDKKKEK) is disordered. The segment covering 170-196 (DAKDDDGPSTKKHAGVDKKLQDKKKEK) has biased composition (basic and acidic residues).

This sequence belongs to the ubiquitin-conjugating enzyme family.

The enzyme catalyses S-ubiquitinyl-[E1 ubiquitin-activating enzyme]-L-cysteine + [E2 ubiquitin-conjugating enzyme]-L-cysteine = [E1 ubiquitin-activating enzyme]-L-cysteine + S-ubiquitinyl-[E2 ubiquitin-conjugating enzyme]-L-cysteine.. It participates in protein modification; protein ubiquitination. In terms of biological role, catalyzes the covalent attachment of ubiquitin to other proteins. Acts as an essential factor of the anaphase promoting complex/cyclosome (APC/C), a cell cycle-regulated ubiquitin ligase that controls progression through mitosis. Acts by specifically elongating polyubiquitin chains initiated by the E2 enzyme vih/UbcH10 on APC/C substrates, enhancing the degradation of APC/C substrates by the proteasome and promoting mitotic exit. The protein is Ubiquitin-conjugating enzyme E2 S of Drosophila grimshawi (Hawaiian fruit fly).